Consider the following 528-residue polypeptide: GMP synthase [glutamine-hydrolyzing] (528 aa).

Residues 13 to 204 (AIVILDFGSQ…VYHICGCEPD (192 aa)) enclose the Glutamine amidotransferase type-1 domain. C90 (nucleophile) is an active-site residue. Residues H178 and E180 contribute to the active site. One can recognise a GMPS ATP-PPase domain in the interval 205-403 (WTTEAFIDEA…LGLPEEIVSR (199 aa)). 232 to 238 (SGGVDSS) lines the ATP pocket.

In terms of assembly, homodimer.

It carries out the reaction XMP + L-glutamine + ATP + H2O = GMP + L-glutamate + AMP + diphosphate + 2 H(+). The protein operates within purine metabolism; GMP biosynthesis; GMP from XMP (L-Gln route): step 1/1. Its function is as follows. Catalyzes the synthesis of GMP from XMP. The protein is GMP synthase [glutamine-hydrolyzing] of Synechococcus sp. (strain CC9311).